The primary structure comprises 512 residues: Pentatricopeptide repeat-containing protein At1g64583, mitochondrial (512 aa).

Residues 1–34 constitute a mitochondrion transit peptide; that stretch reads MRRLIVTGIATSTAKGFRRVVNPNLLGGGAAARA. PPR repeat units lie at residues 70–104, 105–139, 140–174, 175–209, 210–244, 245–279, 280–314, 315–349, 350–384, 385–415, 420–454, and 455–489; these read SIVD…GISH, DLYS…GYEP, SIVT…GYEP, NVVV…GLGA, DVVT…SINP, DVVT…SVDP, NNVT…GCFP, NVVT…GFNA, DIFT…RVTP, DIIT…MRES, GIVA…GVKP, and DART…GIIC.

Belongs to the PPR family. P subfamily.

The protein resides in the mitochondrion. This is Pentatricopeptide repeat-containing protein At1g64583, mitochondrial from Arabidopsis thaliana (Mouse-ear cress).